Here is a 303-residue protein sequence, read N- to C-terminus: tRNA pseudouridine synthase B (303 aa).

Asp-38 acts as the Nucleophile in catalysis.

This sequence belongs to the pseudouridine synthase TruB family. Type 1 subfamily.

The catalysed reaction is uridine(55) in tRNA = pseudouridine(55) in tRNA. Its function is as follows. Responsible for synthesis of pseudouridine from uracil-55 in the psi GC loop of transfer RNAs. The polypeptide is tRNA pseudouridine synthase B (Oceanobacillus iheyensis (strain DSM 14371 / CIP 107618 / JCM 11309 / KCTC 3954 / HTE831)).